The primary structure comprises 457 residues: Siroheme synthase (457 aa).

The segment at 1-204 (MDHLPIFCQL…ADEKAVNATT (204 aa)) is precorrin-2 dehydrogenase /sirohydrochlorin ferrochelatase. Residues 22–23 (DV) and 43–44 (LT) contribute to the NAD(+) site. S128 is modified (phosphoserine). The segment at 216–457 (GEVVLVGAGP…RDKLNWFSNY (242 aa)) is uroporphyrinogen-III C-methyltransferase. An S-adenosyl-L-methionine-binding site is contributed by P225. D248 serves as the catalytic Proton acceptor. K270 functions as the Proton donor in the catalytic mechanism. Residues 301–303 (GGD), I306, 331–332 (TA), M382, and G411 each bind S-adenosyl-L-methionine.

This sequence in the N-terminal section; belongs to the precorrin-2 dehydrogenase / sirohydrochlorin ferrochelatase family. The protein in the C-terminal section; belongs to the precorrin methyltransferase family.

It carries out the reaction uroporphyrinogen III + 2 S-adenosyl-L-methionine = precorrin-2 + 2 S-adenosyl-L-homocysteine + H(+). The catalysed reaction is precorrin-2 + NAD(+) = sirohydrochlorin + NADH + 2 H(+). It catalyses the reaction siroheme + 2 H(+) = sirohydrochlorin + Fe(2+). The protein operates within cofactor biosynthesis; adenosylcobalamin biosynthesis; precorrin-2 from uroporphyrinogen III: step 1/1. It participates in cofactor biosynthesis; adenosylcobalamin biosynthesis; sirohydrochlorin from precorrin-2: step 1/1. It functions in the pathway porphyrin-containing compound metabolism; siroheme biosynthesis; precorrin-2 from uroporphyrinogen III: step 1/1. Its pathway is porphyrin-containing compound metabolism; siroheme biosynthesis; siroheme from sirohydrochlorin: step 1/1. The protein operates within porphyrin-containing compound metabolism; siroheme biosynthesis; sirohydrochlorin from precorrin-2: step 1/1. In terms of biological role, multifunctional enzyme that catalyzes the SAM-dependent methylations of uroporphyrinogen III at position C-2 and C-7 to form precorrin-2 via precorrin-1. Then it catalyzes the NAD-dependent ring dehydrogenation of precorrin-2 to yield sirohydrochlorin. Finally, it catalyzes the ferrochelation of sirohydrochlorin to yield siroheme. This Salmonella heidelberg (strain SL476) protein is Siroheme synthase.